The chain runs to 359 residues: (2E,6E)-farnesyl diphosphate synthase (359 aa).

A disordered region spans residues 1–21; sequence MRGTDEKYGLPPQPDSDRMTR. Isopentenyl diphosphate contacts are provided by Lys73, Arg76, and His105. Residues Asp112 and Asp116 each coordinate Mg(2+). The DDXXD motif motif lies at 112–116; sequence DDLMD. Arg121 is a (2E)-geranyl diphosphate binding site. Isopentenyl diphosphate is bound at residue Arg122. 3 residues coordinate (2E)-geranyl diphosphate: Lys201, Thr202, and Gln239. The short motif at 242–246 is the DDXXD motif element; the sequence is DDLLG. The (2E)-geranyl diphosphate site is built by Lys256 and Lys266.

This sequence belongs to the FPP/GGPP synthase family. Mg(2+) is required as a cofactor.

The protein localises to the cytoplasm. It catalyses the reaction isopentenyl diphosphate + (2E)-geranyl diphosphate = (2E,6E)-farnesyl diphosphate + diphosphate. It participates in isoprenoid biosynthesis; farnesyl diphosphate biosynthesis; farnesyl diphosphate from geranyl diphosphate and isopentenyl diphosphate. Its function is as follows. Catalyzes the condensation of isopentenyl pyrophosphate (IPP) with geranyl diphosphate (GPP) to yield (2E,6E)-farnesyl diphosphate (E,E-FPP). May be used for squalene and possibly sterol biosynthesis. The polypeptide is (2E,6E)-farnesyl diphosphate synthase (Mycobacterium bovis (strain ATCC BAA-935 / AF2122/97)).